A 142-amino-acid chain; its full sequence is Hemoglobin subunit alpha (142 aa).

Serine 1 carries the N-acetylserine modification. The Globin domain maps to serine 1 to arginine 142. Histidine 59 is an O2 binding site. Histidine 88 contributes to the heme b binding site.

The protein belongs to the globin family. Heterotetramer of two alpha chains and two beta chains. Red blood cells.

Its function is as follows. Involved in oxygen transport from gills to the various peripheral tissues. The polypeptide is Hemoglobin subunit alpha (hba) (Gymnodraco acuticeps (Antarctic dragonfish)).